Reading from the N-terminus, the 843-residue chain is Protein P (843 aa).

The tract at residues 1 to 177 (MPLSYPHFRK…FCGSPYSWEQ (177 aa)) is terminal protein domain (TP). Residues 178-346 (ELQHGSTSIN…YCLSHIINLL (169 aa)) are spacer. Disordered stretches follow at residues 180–221 (QHGS…FQQS) and 282–313 (REKT…GSVR). The span at 196-221 (SLCTQSSGILSRPSAGSSIQGKFQQS) shows a compositional bias: polar residues. The tract at residues 347–690 (EDWGPCYEHG…YMHLYPVARQ (344 aa)) is polymerase/reverse transcriptase domain (RT). Residues 357 to 600 (QHHIRTPRTP…YTLNFMGYVI (244 aa)) enclose the Reverse transcriptase domain. Residues D429, D551, and D552 each coordinate Mg(2+).

It belongs to the hepadnaviridae P protein family.

The enzyme catalyses DNA(n) + a 2'-deoxyribonucleoside 5'-triphosphate = DNA(n+1) + diphosphate. It carries out the reaction Endonucleolytic cleavage to 5'-phosphomonoester.. Its activity is regulated as follows. Activated by host HSP70 and HSP40 in vitro to be able to bind the epsilon loop of the pgRNA. Because deletion of the RNase H region renders the protein partly chaperone-independent, the chaperones may be needed indirectly to relieve occlusion of the RNA-binding site by this domain. Inhibited by several reverse-transcriptase inhibitors: Lamivudine, Adefovir and Entecavir. Its function is as follows. Multifunctional enzyme that converts the viral RNA genome into dsDNA in viral cytoplasmic capsids. This enzyme displays a DNA polymerase activity that can copy either DNA or RNA templates, and a ribonuclease H (RNase H) activity that cleaves the RNA strand of RNA-DNA heteroduplexes in a partially processive 3'- to 5'-endonucleasic mode. Neo-synthesized pregenomic RNA (pgRNA) are encapsidated together with the P protein, and reverse-transcribed inside the nucleocapsid. Initiation of reverse-transcription occurs first by binding the epsilon loop on the pgRNA genome, and is initiated by protein priming, thereby the 5'-end of (-)DNA is covalently linked to P protein. Partial (+)DNA is synthesized from the (-)DNA template and generates the relaxed circular DNA (RC-DNA) genome. After budding and infection, the RC-DNA migrates in the nucleus, and is converted into a plasmid-like covalently closed circular DNA (cccDNA). The activity of P protein does not seem to be necessary for cccDNA generation, and is presumably released from (+)DNA by host nuclear DNA repair machinery. The chain is Protein P from Homo sapiens (Human).